The following is a 193-amino-acid chain: 3-isopropylmalate dehydratase small subunit (193 aa).

This sequence belongs to the LeuD family. LeuD type 1 subfamily. As to quaternary structure, heterodimer of LeuC and LeuD.

The enzyme catalyses (2R,3S)-3-isopropylmalate = (2S)-2-isopropylmalate. Its pathway is amino-acid biosynthesis; L-leucine biosynthesis; L-leucine from 3-methyl-2-oxobutanoate: step 2/4. In terms of biological role, catalyzes the isomerization between 2-isopropylmalate and 3-isopropylmalate, via the formation of 2-isopropylmaleate. This is 3-isopropylmalate dehydratase small subunit from Bacillus anthracis (strain CDC 684 / NRRL 3495).